Reading from the N-terminus, the 215-residue chain is Ribosomal RNA small subunit methyltransferase G (215 aa).

S-adenosyl-L-methionine-binding positions include Gly-78, Leu-83, 128–129 (AE), and Arg-146.

Belongs to the methyltransferase superfamily. RNA methyltransferase RsmG family.

Its subcellular location is the cytoplasm. The catalysed reaction is guanosine(527) in 16S rRNA + S-adenosyl-L-methionine = N(7)-methylguanosine(527) in 16S rRNA + S-adenosyl-L-homocysteine. Its function is as follows. Specifically methylates the N7 position of guanine in position 527 of 16S rRNA. The polypeptide is Ribosomal RNA small subunit methyltransferase G (Anaeromyxobacter dehalogenans (strain 2CP-1 / ATCC BAA-258)).